The following is a 530-amino-acid chain: Tyrosinase (530 aa).

The first 17 residues, 1–17, serve as a signal peptide directing secretion; that stretch reads MLLAALYCLLWSFRTSA. The Lumenal, melanosome portion of the chain corresponds to 19–473; that stretch reads HFPRACASSK…IKPYLEQAQR (455 aa). Residue Asn-86 is glycosylated (N-linked (GlcNAc...) asparagine). Cu cation is bound by residues His-180, His-202, and His-211. N-linked (GlcNAc...) asparagine glycans are attached at residues Asn-230, Asn-290, and Asn-337. Cu cation-binding residues include His-363 and His-367. N-linked (GlcNAc...) asparagine glycosylation occurs at Asn-371. His-390 contributes to the Cu cation binding site. A helical transmembrane segment spans residues 474–494; that stretch reads IWPWLIGAAVVGSVLTAVLGG. Residues 495 to 530 lie on the Cytoplasmic side of the membrane; the sequence is LTSLLCRRKRNQLPEEKQPLLMEKEDYHNLMYQSHL.

This sequence belongs to the tyrosinase family. As to quaternary structure, forms an OPN3-dependent complex with DCT in response to blue light in melanocytes. Cu(2+) serves as cofactor. Post-translationally, glycosylated.

It localises to the melanosome membrane. It is found in the melanosome. The enzyme catalyses 2 L-dopa + O2 = 2 L-dopaquinone + 2 H2O. The catalysed reaction is L-tyrosine + O2 = L-dopaquinone + H2O. It carries out the reaction 2 5,6-dihydroxyindole-2-carboxylate + O2 = 2 indole-5,6-quinone-2-carboxylate + 2 H2O. Functionally, this is a copper-containing oxidase that functions in the formation of pigments such as melanins and other polyphenolic compounds. Catalyzes the initial and rate limiting step in the cascade of reactions leading to melanin production from tyrosine. In addition to hydroxylating tyrosine to DOPA (3,4-dihydroxyphenylalanine), also catalyzes the oxidation of DOPA to DOPA-quinone, and possibly the oxidation of DHI (5,6-dihydroxyindole) to indole-5,6 quinone. The sequence is that of Tyrosinase (TYR) from Bos taurus (Bovine).